Here is a 3674-residue protein sequence, read N- to C-terminus: Dystrophin-1 (3674 aa).

Residues 1–25 form a disordered region; that stretch reads MLFSGASTAKPKKDEKKDKKSDRDP. The segment covering 11-25 has biased composition (basic and acidic residues); that stretch reads PKKDEKKDKKSDRDP. The interval 30 to 39 is actin-binding; that stretch reads QEWVFVRWAN. Residues 129–234 enclose the Calponin-homology (CH) domain; sequence EKLSEAIKQW…YLMSLYLAMI (106 aa). The interval 265–325 is disordered; it reads SQPSTSSSSA…KSGKSKKARR (61 aa). Spectrin repeat units lie at residues 327–435, 436–541, and 612–656; these read EQLA…VLQQ, QIHL…KLDG, and CELV…TLVK. A compositionally biased stretch (basic and acidic residues) spans 655 to 674; sequence VKSGKADVKQVQESQNEQKE. 5 disordered regions span residues 655–689, 968–991, 1587–1606, 1796–1833, and 2387–2466; these read VKSGKADVKQVQESQNEQKEQPASSEGLSTDTEGE, NSQMSNETVEKAETRKAEMEEKRR, ASAEKAPAPELRDARLSSPS, LSATEKKPVETVKSTIPDRPEVPEEPEKSSPDRTSRSS, and MNDS…GSTG. Residues 675-685 show a composition bias toward polar residues; the sequence is QPASSEGLSTD. Basic and acidic residues predominate over residues 975–991; the sequence is TVEKAETRKAEMEEKRR. Residues 1796–1830 show a composition bias toward basic and acidic residues; that stretch reads LSATEKKPVETVKSTIPDRPEVPEEPEKSSPDRTS. Polar residues predominate over residues 2391–2411; that stretch reads GGDTTESRSTVVEMTSVHTKQ. Spectrin repeat units follow at residues 2576-2673, 2725-2789, 2792-2905, and 2926-3032; these read RNEM…VLEA, FKTL…RLEK, QEWE…RLKK, and QRLQ…AVRN. The region spanning 3047–3081 is the WW domain; it reads QSVTLPWQRAISKSNLLPYYIEQTSEKTQWEHPVW. A ZZ-type zinc finger spans residues 3301-3357; it reads KHASKCNVCKMFPIIGIRYRCLTCFNCDLCQNCFFSQRTAKSHRTNHPMQEYCEKTT. Zn(2+) is bound by residues C3306, C3309, C3321, C3324, C3330, C3333, H3343, and H3347. Disordered regions lie at residues 3481 to 3522 and 3568 to 3645; these read STME…TQSQ and KQQA…QMQN. Positions 3568–3579 are enriched in polar residues; sequence KQQAPLSTNSLL.

As to quaternary structure, component of the dystrophin glycoprotein complex (DGC). Interacts with dyb-1 and stn-1 to form the DGC. Interacts with stn-2. Expressed in body wall, head, pharyngeal and vulval muscles, from late embryogenesis to adulthood (at protein level).

It is found in the cell membrane. The protein resides in the sarcolemma. Its subcellular location is the cytoplasm. The protein localises to the cytoskeleton. Its function is as follows. Plays a role in cholinergic transmission and as a functional partner of dystrobrevin (dyb-1), necessary for muscle maintenance. Required for neuronal positioning. May play a role in the localization of slo-1 near dense bodies in the muscle. The polypeptide is Dystrophin-1 (dys-1) (Caenorhabditis elegans).